Consider the following 257-residue polypeptide: 5-keto-4-deoxy-D-glucarate aldolase (257 aa).

His-51 (proton acceptor) is an active-site residue. Gln-152 contributes to the substrate binding site. Mg(2+) is bound at residue Glu-154. Substrate contacts are provided by Ser-179 and Asp-180. Asp-180 serves as a coordination point for Mg(2+).

Belongs to the HpcH/HpaI aldolase family. KDGluc aldolase subfamily. As to quaternary structure, homohexamer; trimer of dimers. Mg(2+) is required as a cofactor.

The enzyme catalyses 5-dehydro-4-deoxy-D-glucarate = 2-hydroxy-3-oxopropanoate + pyruvate. The catalysed reaction is 2-dehydro-3-deoxy-D-glucarate = 2-hydroxy-3-oxopropanoate + pyruvate. It participates in carbohydrate acid metabolism; galactarate degradation; D-glycerate from galactarate: step 2/3. Catalyzes the reversible retro-aldol cleavage of both 5-keto-4-deoxy-D-glucarate and 2-keto-3-deoxy-D-glucarate to pyruvate and tartronic semialdehyde. The sequence is that of 5-keto-4-deoxy-D-glucarate aldolase from Shigella boydii serotype 18 (strain CDC 3083-94 / BS512).